A 237-amino-acid polypeptide reads, in one-letter code: D-aminoacyl-tRNA deacylase (237 aa).

The protein belongs to the DtdA deacylase family. In terms of assembly, monomer. The cofactor is Zn(2+).

It catalyses the reaction a D-aminoacyl-tRNA + H2O = a tRNA + a D-alpha-amino acid + H(+). The enzyme catalyses glycyl-tRNA(Ala) + H2O = tRNA(Ala) + glycine + H(+). Its function is as follows. D-aminoacyl-tRNA deacylase with broad substrate specificity. By recycling D-aminoacyl-tRNA to D-amino acids and free tRNA molecules, this enzyme counteracts the toxicity associated with the formation of D-aminoacyl-tRNA entities in vivo. The polypeptide is D-aminoacyl-tRNA deacylase (Metallosphaera sedula (strain ATCC 51363 / DSM 5348 / JCM 9185 / NBRC 15509 / TH2)).